The chain runs to 567 residues: Geranylgeranyl transferase type-2 subunit alpha (567 aa).

PFTA repeat units follow at residues 44–78, 88–122, 124–158, 159–193, 207–241, and 363–397; these read LDESVLELTSQILGANPDFATLWNCRREVLQQLET, LVKAELGFLESCLRVNPKSYGTWHHRCWLLSRLPE, NWARELELCARFLEADERNFHCWDYRRFVAAQAAV, APAEELAFTDSLITRNFSNYSSWHYRSCLLPQLHP, VLLRELELVQNAFFTDPNDQSAWFYHRWLLGRAEP, and VLQSELESCKELQELEPENKWCLLTIILLMRALDP. Serine 98 carries the phosphoserine modification. LRR repeat units follow at residues 442 to 463, 464 to 486, 487 to 508, 509 to 530, and 534 to 555; these read DVRVLHLAHKDLTVLCHLEQLL, LVTHLDLSHNRLRALPPALAALR, CLEVLQASDNVLENLDGVANLP, RLRELLLCNNRLQQSAALQTLA, and RLVFLNLQGNSLCQEEGIRERL.

This sequence belongs to the protein prenyltransferase subunit alpha family. In terms of assembly, heterotrimer composed of RABGGTA, RABGGTB and CHM; within this trimer, RABGGTA and RABGGTB form the catalytic component B, while CHM (component A) mediates peptide substrate binding. The Rab GGTase dimer (RGGT) interacts with CHM (component A) prior to Rab protein binding; the association is stabilized by geranylgeranyl pyrophosphate (GGpp). The CHM:RGGT:Rab complex is destabilized by GGpp. Interacts with non-phosphorylated form of RAB8A; phosphorylation of RAB8A at 'Thr-72' disrupts this interaction.

It catalyses the reaction geranylgeranyl diphosphate + L-cysteinyl-[protein] = S-geranylgeranyl-L-cysteinyl-[protein] + diphosphate. Its activity is regulated as follows. The enzymatic reaction requires the aid of a Rab escort protein (also called component A), such as CHM. Catalyzes the transfer of a geranylgeranyl moiety from geranylgeranyl diphosphate to both cysteines of Rab proteins with the C-terminal sequence -XXCC, -XCXC and -CCXX, such as RAB1A, RAB3A, RAB5A and RAB7A. This Mus musculus (Mouse) protein is Geranylgeranyl transferase type-2 subunit alpha (Rabggta).